The primary structure comprises 95 residues: Putative protein RDUR (95 aa).

Positions 1 to 12 are enriched in basic and acidic residues; that stretch reads MNNSFNKEDRMS. The segment at 1-20 is disordered; that stretch reads MNNSFNKEDRMSSDTMVGSC.

In terms of biological role, could play a role in innate immunity against viruses. This Homo sapiens (Human) protein is Putative protein RDUR.